Reading from the N-terminus, the 280-residue chain is Diaminopimelate epimerase (280 aa).

Residues Asn-11 and Asn-64 each contribute to the substrate site. Cys-73 serves as the catalytic Proton donor. Substrate is bound by residues Gly-74 to Asn-75, Asn-162, Asn-195, and Glu-213 to Arg-214. Cys-222 serves as the catalytic Proton acceptor. Gly-223–Thr-224 contacts substrate.

The protein belongs to the diaminopimelate epimerase family. In terms of assembly, homodimer.

The protein localises to the cytoplasm. It catalyses the reaction (2S,6S)-2,6-diaminopimelate = meso-2,6-diaminopimelate. It functions in the pathway amino-acid biosynthesis; L-lysine biosynthesis via DAP pathway; DL-2,6-diaminopimelate from LL-2,6-diaminopimelate: step 1/1. In terms of biological role, catalyzes the stereoinversion of LL-2,6-diaminopimelate (L,L-DAP) to meso-diaminopimelate (meso-DAP), a precursor of L-lysine and an essential component of the bacterial peptidoglycan. In Pelotomaculum thermopropionicum (strain DSM 13744 / JCM 10971 / SI), this protein is Diaminopimelate epimerase.